The primary structure comprises 221 residues: 2-amino-5-formylamino-6-ribosylaminopyrimidin-4(3H)-one 5'-monophosphate deformylase (221 aa).

Fe cation contacts are provided by Glu-29, His-31, Asp-40, and His-108.

The protein belongs to the creatininase superfamily. FAPy deformylase family. Homodimer. Fe(2+) serves as cofactor. It depends on Zn(2+) as a cofactor.

The catalysed reaction is 2-amino-5-formylamino-6-(5-phospho-D-ribosylamino)pyrimidin-4(3H)-one + H2O = 2,5-diamino-6-(1-D-ribosylamino)pyrimidin-4(3H)-one 5'-phosphate + formate + H(+). Its pathway is cofactor biosynthesis; coenzyme F420 biosynthesis. The protein operates within cofactor biosynthesis; riboflavin biosynthesis. Catalyzes the hydrolysis of the formamide of 2-amino-5-formylamino-6-ribosylamino-4(3H)-pyrimidinone 5'-monophosphate (FAPy) to form 2,5-diamino-6-ribosylamino-4(3H)-pyrimidinone 5'-phosphate (APy). The polypeptide is 2-amino-5-formylamino-6-ribosylaminopyrimidin-4(3H)-one 5'-monophosphate deformylase (Methanococcus maripaludis (strain DSM 14266 / JCM 13030 / NBRC 101832 / S2 / LL)).